Reading from the N-terminus, the 510-residue chain is NAD(P)H-quinone oxidoreductase subunit 2 B, chloroplastic (510 aa).

The next 13 membrane-spanning stretches (helical) occupy residues 24–44 (LLLF…GLIL), 57–77 (IPWL…ALLF), 99–119 (IFQF…VEYI), 124–144 (MAIT…MFLC), 150–170 (ITIF…SGYT), 183–203 (YLLM…WLYG), 229–249 (ISIA…PAPF), 295–315 (WHLL…LIAI), 323–343 (MLAY…IVGD), 354–374 (YMLF…LFGL), 395–415 (ALSS…AGFF), 418–438 (LHLF…IGLL), and 484–504 (MIVC…IIAI).

This sequence belongs to the complex I subunit 2 family. As to quaternary structure, NDH is composed of at least 16 different subunits, 5 of which are encoded in the nucleus.

The protein resides in the plastid. It is found in the chloroplast thylakoid membrane. The enzyme catalyses a plastoquinone + NADH + (n+1) H(+)(in) = a plastoquinol + NAD(+) + n H(+)(out). It catalyses the reaction a plastoquinone + NADPH + (n+1) H(+)(in) = a plastoquinol + NADP(+) + n H(+)(out). Its function is as follows. NDH shuttles electrons from NAD(P)H:plastoquinone, via FMN and iron-sulfur (Fe-S) centers, to quinones in the photosynthetic chain and possibly in a chloroplast respiratory chain. The immediate electron acceptor for the enzyme in this species is believed to be plastoquinone. Couples the redox reaction to proton translocation, and thus conserves the redox energy in a proton gradient. This is NAD(P)H-quinone oxidoreductase subunit 2 B, chloroplastic from Drimys granadensis.